We begin with the raw amino-acid sequence, 123 residues long: Large ribosomal subunit protein bL12 (123 aa).

The protein belongs to the bacterial ribosomal protein bL12 family. Homodimer. Part of the ribosomal stalk of the 50S ribosomal subunit. Forms a multimeric L10(L12)X complex, where L10 forms an elongated spine to which 2 to 4 L12 dimers bind in a sequential fashion. Binds GTP-bound translation factors.

In terms of biological role, forms part of the ribosomal stalk which helps the ribosome interact with GTP-bound translation factors. Is thus essential for accurate translation. This Borrelia turicatae (strain 91E135) protein is Large ribosomal subunit protein bL12.